We begin with the raw amino-acid sequence, 880 residues long: Alanine--tRNA ligase (880 aa).

Residues histidine 571, histidine 575, cysteine 673, and histidine 677 each coordinate Zn(2+).

Belongs to the class-II aminoacyl-tRNA synthetase family. It depends on Zn(2+) as a cofactor.

It is found in the cytoplasm. The catalysed reaction is tRNA(Ala) + L-alanine + ATP = L-alanyl-tRNA(Ala) + AMP + diphosphate. Functionally, catalyzes the attachment of alanine to tRNA(Ala) in a two-step reaction: alanine is first activated by ATP to form Ala-AMP and then transferred to the acceptor end of tRNA(Ala). Also edits incorrectly charged Ser-tRNA(Ala) and Gly-tRNA(Ala) via its editing domain. This chain is Alanine--tRNA ligase, found in Oleidesulfovibrio alaskensis (strain ATCC BAA-1058 / DSM 17464 / G20) (Desulfovibrio alaskensis).